Here is a 323-residue protein sequence, read N- to C-terminus: Mitochondrial glutamate carrier 1 (323 aa).

Solcar repeat units lie at residues I6–Q93, L101–L214, and S223–E312. The next 6 membrane-spanning stretches (helical) occupy residues L12–A32, Y62–I82, M107–L127, G189–A209, S223–V243, and A292–E312.

The protein belongs to the mitochondrial carrier (TC 2.A.29) family. As to expression, detected in insulin-secreting beta-cells and pancreatic islets (at the protein level).

The protein resides in the mitochondrion inner membrane. The enzyme catalyses L-glutamate(in) + H(+)(in) = L-glutamate(out) + H(+)(out). Its function is as follows. Mitochondrial glutamate/H(+) symporter. Responsible for the transport of glutamate from the cytosol into the mitochondrial matrix with the concomitant import of a proton. Plays a role in the control of glucose-stimulated insulin secretion. The sequence is that of Mitochondrial glutamate carrier 1 from Rattus norvegicus (Rat).